Here is a 259-residue protein sequence, read N- to C-terminus: tRNA (guanine-N(1)-)-methyltransferase (259 aa).

S-adenosyl-L-methionine contacts are provided by residues G113 and 133–138 (IGDYVL).

The protein belongs to the RNA methyltransferase TrmD family. As to quaternary structure, homodimer.

It is found in the cytoplasm. The enzyme catalyses guanosine(37) in tRNA + S-adenosyl-L-methionine = N(1)-methylguanosine(37) in tRNA + S-adenosyl-L-homocysteine + H(+). Its function is as follows. Specifically methylates guanosine-37 in various tRNAs. The sequence is that of tRNA (guanine-N(1)-)-methyltransferase from Xanthomonas oryzae pv. oryzae (strain MAFF 311018).